Here is a 481-residue protein sequence, read N- to C-terminus: Probable zeta-carotene desaturase (481 aa).

It belongs to the zeta carotene desaturase family. Decylplastoquinone is required as a cofactor. 6-decylubiquinone serves as cofactor.

The enzyme catalyses 9,9'-di-cis-zeta-carotene + 2 a quinone = 7,7',9,9'-tetra-cis-lycopene + 2 a quinol. Its pathway is carotenoid biosynthesis; lycopene biosynthesis. Functionally, catalyzes the conversion of zeta-carotene to lycopene via the intermediary of neurosporene. It carries out two consecutive desaturations (introduction of double bonds) at positions C-7 and C-7'. This Synechococcus elongatus (strain ATCC 33912 / PCC 7942 / FACHB-805) (Anacystis nidulans R2) protein is Probable zeta-carotene desaturase (zds).